Consider the following 579-residue polypeptide: Aspartate--tRNA(Asp/Asn) ligase (579 aa).

L-aspartate is bound at residue glutamate 169. Residues 193 to 196 form an aspartate region; the sequence is QLFK. Arginine 215 serves as a coordination point for L-aspartate. ATP-binding positions include 215–217 and glutamine 224; that span reads RDE. Histidine 437 provides a ligand contact to L-aspartate. Residue glutamate 471 coordinates ATP. Arginine 478 is an L-aspartate binding site. 523 to 526 serves as a coordination point for ATP; the sequence is GWDR. The tract at residues 551–579 is disordered; it reads DPLTGAPTPITAEQRREAGVDAVPEQATS.

The protein belongs to the class-II aminoacyl-tRNA synthetase family. Type 1 subfamily. As to quaternary structure, homodimer.

The protein localises to the cytoplasm. The enzyme catalyses tRNA(Asx) + L-aspartate + ATP = L-aspartyl-tRNA(Asx) + AMP + diphosphate. In terms of biological role, aspartyl-tRNA synthetase with relaxed tRNA specificity since it is able to aspartylate not only its cognate tRNA(Asp) but also tRNA(Asn). Reaction proceeds in two steps: L-aspartate is first activated by ATP to form Asp-AMP and then transferred to the acceptor end of tRNA(Asp/Asn). The chain is Aspartate--tRNA(Asp/Asn) ligase from Thermobifida fusca (strain YX).